Here is a 138-residue protein sequence, read N- to C-terminus: Large ribosomal subunit protein uL16 (138 aa).

Over residues 1 to 16 the composition is skewed to basic residues; the sequence is MLIPRRVKHRKQHHPG. Residues 1–24 are disordered; the sequence is MLIPRRVKHRKQHHPGRSGAATGG.

This sequence belongs to the universal ribosomal protein uL16 family. Part of the 50S ribosomal subunit.

In terms of biological role, binds 23S rRNA and is also seen to make contacts with the A and possibly P site tRNAs. The protein is Large ribosomal subunit protein uL16 of Arthrobacter sp. (strain FB24).